A 369-amino-acid polypeptide reads, in one-letter code: Methionine aminopeptidase 1B, chloroplastic (369 aa).

The N-terminal 61 residues, 1-61 (MASSVFLSSF…YSPRQFHVSA (61 aa)), are a transit peptide targeting the chloroplast. His199 is a substrate binding site. Residues Asp216, Asp227, and His290 each coordinate a divalent metal cation. Residue His297 coordinates substrate. The a divalent metal cation site is built by Glu322 and Glu353.

It belongs to the peptidase M24A family. Methionine aminopeptidase type 1 subfamily. The cofactor is Co(2+). Zn(2+) serves as cofactor. Requires Mn(2+) as cofactor. It depends on Fe(2+) as a cofactor. In terms of tissue distribution, ubiquitous. Preferentially expressed in green tissues.

The protein localises to the plastid. The protein resides in the chloroplast. It carries out the reaction Release of N-terminal amino acids, preferentially methionine, from peptides and arylamides.. In terms of biological role, removes the N-terminal methionine from nascent proteins. The N-terminal methionine is often cleaved when the second residue in the primary sequence is small and uncharged (Met-Ala-, Cys, Gly, Pro, Ser, Thr, or Val). This chain is Methionine aminopeptidase 1B, chloroplastic (MAP1B), found in Arabidopsis thaliana (Mouse-ear cress).